We begin with the raw amino-acid sequence, 404 residues long: Probable tRNA sulfurtransferase (404 aa).

One can recognise a THUMP domain in the interval 60–165; it reads QPIVEALKLV…DEAAYISYEE (106 aa). Residues 183-184, 208-209, R265, G287, and Q296 each bind ATP; these read ML and HF.

It belongs to the ThiI family.

It localises to the cytoplasm. It catalyses the reaction [ThiI sulfur-carrier protein]-S-sulfanyl-L-cysteine + a uridine in tRNA + 2 reduced [2Fe-2S]-[ferredoxin] + ATP + H(+) = [ThiI sulfur-carrier protein]-L-cysteine + a 4-thiouridine in tRNA + 2 oxidized [2Fe-2S]-[ferredoxin] + AMP + diphosphate. The enzyme catalyses [ThiS sulfur-carrier protein]-C-terminal Gly-Gly-AMP + S-sulfanyl-L-cysteinyl-[cysteine desulfurase] + AH2 = [ThiS sulfur-carrier protein]-C-terminal-Gly-aminoethanethioate + L-cysteinyl-[cysteine desulfurase] + A + AMP + 2 H(+). It functions in the pathway cofactor biosynthesis; thiamine diphosphate biosynthesis. Its function is as follows. Catalyzes the ATP-dependent transfer of a sulfur to tRNA to produce 4-thiouridine in position 8 of tRNAs, which functions as a near-UV photosensor. Also catalyzes the transfer of sulfur to the sulfur carrier protein ThiS, forming ThiS-thiocarboxylate. This is a step in the synthesis of thiazole, in the thiamine biosynthesis pathway. The sulfur is donated as persulfide by IscS. The sequence is that of Probable tRNA sulfurtransferase from Streptococcus pyogenes serotype M4 (strain MGAS10750).